Here is a 572-residue protein sequence, read N- to C-terminus: Arginine--tRNA ligase (572 aa).

The 'HIGH' region signature appears at 122–132 (PNLAKEMHVGH).

Belongs to the class-I aminoacyl-tRNA synthetase family. In terms of assembly, monomer.

It is found in the cytoplasm. It catalyses the reaction tRNA(Arg) + L-arginine + ATP = L-arginyl-tRNA(Arg) + AMP + diphosphate. In Neisseria meningitidis serogroup A / serotype 4A (strain DSM 15465 / Z2491), this protein is Arginine--tRNA ligase.